We begin with the raw amino-acid sequence, 296 residues long: 3-methyl-2-oxobutanoate hydroxymethyltransferase (296 aa).

The interval 1–33 (MDASDTPTHPAPHPADPAATPYGAPTTPPRPLR) is disordered. A compositionally biased stretch (low complexity) spans 16 to 25 (DPAATPYGAP). 2 residues coordinate Mg(2+): Asp77 and Asp116. 3-methyl-2-oxobutanoate is bound by residues 77–78 (DS), Asp116, and Lys146. A Mg(2+)-binding site is contributed by Glu148. Glu214 (proton acceptor) is an active-site residue.

This sequence belongs to the PanB family. As to quaternary structure, homodecamer; pentamer of dimers. Mg(2+) serves as cofactor.

The protein resides in the cytoplasm. It carries out the reaction 3-methyl-2-oxobutanoate + (6R)-5,10-methylene-5,6,7,8-tetrahydrofolate + H2O = 2-dehydropantoate + (6S)-5,6,7,8-tetrahydrofolate. It participates in cofactor biosynthesis; (R)-pantothenate biosynthesis; (R)-pantoate from 3-methyl-2-oxobutanoate: step 1/2. In terms of biological role, catalyzes the reversible reaction in which hydroxymethyl group from 5,10-methylenetetrahydrofolate is transferred onto alpha-ketoisovalerate to form ketopantoate. The sequence is that of 3-methyl-2-oxobutanoate hydroxymethyltransferase from Frankia casuarinae (strain DSM 45818 / CECT 9043 / HFP020203 / CcI3).